The sequence spans 220 residues: Adenylate kinase (220 aa).

12 to 17 provides a ligand contact to ATP; the sequence is GAGKGT. Residues 32 to 62 form an NMP region; it reads STGDIFRDIVKKENDELGKKIKEIMERGELV. AMP is bound by residues Thr-33, Arg-38, 60 to 62, 88 to 91, and Gln-95; these read ELV and GYPR. The tract at residues 129–166 is LID; it reads ARRICPKCGRIYNLISLPPKEDELCDDCKVKLVQREDD. Residue Arg-130 coordinates ATP. Residues Cys-133 and Cys-136 each coordinate Zn(2+). 139–140 provides a ligand contact to ATP; the sequence is IY. Zn(2+)-binding residues include Cys-153 and Cys-156. AMP-binding residues include Arg-163 and Arg-174. Position 202 (Ile-202) interacts with ATP.

Belongs to the adenylate kinase family. Monomer.

It is found in the cytoplasm. It catalyses the reaction AMP + ATP = 2 ADP. It functions in the pathway purine metabolism; AMP biosynthesis via salvage pathway; AMP from ADP: step 1/1. In terms of biological role, catalyzes the reversible transfer of the terminal phosphate group between ATP and AMP. Plays an important role in cellular energy homeostasis and in adenine nucleotide metabolism. This chain is Adenylate kinase, found in Thermotoga petrophila (strain ATCC BAA-488 / DSM 13995 / JCM 10881 / RKU-1).